Reading from the N-terminus, the 324-residue chain is ATP-dependent 6-phosphofructokinase (324 aa).

Residue G11 coordinates ATP. Residue 21 to 25 participates in ADP binding; sequence RAVVR. Residues 72-73 and 102-105 contribute to the ATP site; these read RE and GNGS. N103 serves as a coordination point for Mg(2+). Substrate is bound at residue 126 to 128; it reads TID. D128 (proton acceptor) is an active-site residue. ADP is bound at residue R155. Substrate-binding positions include R163 and 170-172; that span reads MGR. Residues 186–188, R212, and 214–216 contribute to the ADP site; these read GAD and KKF. Substrate-binding positions include E223, R248, and 254 to 257; that span reads YIQR.

The protein belongs to the phosphofructokinase type A (PFKA) family. ATP-dependent PFK group I subfamily. Prokaryotic clade 'B1' sub-subfamily. As to quaternary structure, homotetramer. Mg(2+) is required as a cofactor.

The protein localises to the cytoplasm. The catalysed reaction is beta-D-fructose 6-phosphate + ATP = beta-D-fructose 1,6-bisphosphate + ADP + H(+). It functions in the pathway carbohydrate degradation; glycolysis; D-glyceraldehyde 3-phosphate and glycerone phosphate from D-glucose: step 3/4. With respect to regulation, allosterically activated by ADP and other diphosphonucleosides, and allosterically inhibited by phosphoenolpyruvate. Functionally, catalyzes the phosphorylation of D-fructose 6-phosphate to fructose 1,6-bisphosphate by ATP, the first committing step of glycolysis. In Persephonella marina (strain DSM 14350 / EX-H1), this protein is ATP-dependent 6-phosphofructokinase.